Consider the following 458-residue polypeptide: Bifunctional protein GlmU (458 aa).

A pyrophosphorylase region spans residues 1-229 (MKEKALSIVI…FMEVEGVNNR (229 aa)). UDP-N-acetyl-alpha-D-glucosamine is bound by residues 11–14 (LAAG), K25, Q76, 81–82 (GT), 103–105 (YGD), G140, E154, N169, and N227. D105 contacts Mg(2+). A Mg(2+)-binding site is contributed by N227. The segment at 230-250 (QQLARLERYYQRKQADNLLLA) is linker. The N-acetyltransferase stretch occupies residues 251 to 458 (GVALADPERF…WQRPTKQTKK (208 aa)). Residues R333 and K351 each coordinate UDP-N-acetyl-alpha-D-glucosamine. Residue H363 is the Proton acceptor of the active site. Residues Y366 and N377 each coordinate UDP-N-acetyl-alpha-D-glucosamine. Acetyl-CoA contacts are provided by residues A380, 386–387 (NY), S405, A423, and R440.

This sequence in the N-terminal section; belongs to the N-acetylglucosamine-1-phosphate uridyltransferase family. It in the C-terminal section; belongs to the transferase hexapeptide repeat family. In terms of assembly, homotrimer. The cofactor is Mg(2+).

The protein localises to the cytoplasm. It catalyses the reaction alpha-D-glucosamine 1-phosphate + acetyl-CoA = N-acetyl-alpha-D-glucosamine 1-phosphate + CoA + H(+). It carries out the reaction N-acetyl-alpha-D-glucosamine 1-phosphate + UTP + H(+) = UDP-N-acetyl-alpha-D-glucosamine + diphosphate. The protein operates within nucleotide-sugar biosynthesis; UDP-N-acetyl-alpha-D-glucosamine biosynthesis; N-acetyl-alpha-D-glucosamine 1-phosphate from alpha-D-glucosamine 6-phosphate (route II): step 2/2. Its pathway is nucleotide-sugar biosynthesis; UDP-N-acetyl-alpha-D-glucosamine biosynthesis; UDP-N-acetyl-alpha-D-glucosamine from N-acetyl-alpha-D-glucosamine 1-phosphate: step 1/1. It functions in the pathway bacterial outer membrane biogenesis; LPS lipid A biosynthesis. In terms of biological role, catalyzes the last two sequential reactions in the de novo biosynthetic pathway for UDP-N-acetylglucosamine (UDP-GlcNAc). The C-terminal domain catalyzes the transfer of acetyl group from acetyl coenzyme A to glucosamine-1-phosphate (GlcN-1-P) to produce N-acetylglucosamine-1-phosphate (GlcNAc-1-P), which is converted into UDP-GlcNAc by the transfer of uridine 5-monophosphate (from uridine 5-triphosphate), a reaction catalyzed by the N-terminal domain. The polypeptide is Bifunctional protein GlmU (Pasteurella multocida (strain Pm70)).